We begin with the raw amino-acid sequence, 455 residues long: Ribulose bisphosphate carboxylase large chain (455 aa).

Residue lysine 5 is modified to N6,N6,N6-trimethyllysine. The substrate site is built by asparagine 114 and threonine 164. The active-site Proton acceptor is the lysine 166. Substrate is bound at residue lysine 168. 3 residues coordinate Mg(2+): lysine 192, aspartate 194, and glutamate 195. Lysine 192 bears the N6-carboxylysine mark. The active-site Proton acceptor is histidine 285. The substrate site is built by arginine 286, histidine 318, and serine 370.

Belongs to the RuBisCO large chain family. Type I subfamily. In terms of assembly, heterohexadecamer of 8 large chains and 8 small chains; disulfide-linked. The disulfide link is formed within the large subunit homodimers. The cofactor is Mg(2+). Post-translationally, the disulfide bond which can form in the large chain dimeric partners within the hexadecamer appears to be associated with oxidative stress and protein turnover.

Its subcellular location is the plastid. It localises to the chloroplast. It catalyses the reaction 2 (2R)-3-phosphoglycerate + 2 H(+) = D-ribulose 1,5-bisphosphate + CO2 + H2O. The catalysed reaction is D-ribulose 1,5-bisphosphate + O2 = 2-phosphoglycolate + (2R)-3-phosphoglycerate + 2 H(+). In terms of biological role, ruBisCO catalyzes two reactions: the carboxylation of D-ribulose 1,5-bisphosphate, the primary event in carbon dioxide fixation, as well as the oxidative fragmentation of the pentose substrate in the photorespiration process. Both reactions occur simultaneously and in competition at the same active site. The polypeptide is Ribulose bisphosphate carboxylase large chain (Lupinus albus (White lupine)).